The chain runs to 202 residues: Ras-related protein Rab-18 (202 aa).

12 residues coordinate GTP: Ser-18, Gly-21, Lys-22, Ser-23, Ser-24, Asp-35, Pro-36, Thr-41, Gly-67, Lys-124, Asp-126, and Ala-153. The Effector region signature appears at 38–46 (QAATIGVDF). S-geranylgeranyl cysteine attachment occurs at residues Cys-198 and Cys-200.

Belongs to the small GTPase superfamily. Rab family.

The protein localises to the cell membrane. It catalyses the reaction GTP + H2O = GDP + phosphate + H(+). Functionally, the small GTPases Rab are key regulators of intracellular membrane trafficking, from the formation of transport vesicles to their fusion with membranes. Rabs cycle between an inactive GDP-bound form and an active GTP-bound form that is able to recruit to membranes different sets of downstream effectors directly responsible for vesicle formation, movement, tethering and fusion. The protein is Ras-related protein Rab-18 (RAB18A) of Lymnaea stagnalis (Great pond snail).